We begin with the raw amino-acid sequence, 239 residues long: uncharacterized protein (239 aa).

Residues 104 to 127 (LPATSQSSQPKSTNSSTESSSIGQ) are disordered. Positions 107 to 127 (TSQSSQPKSTNSSTESSSIGQ) are enriched in low complexity. A coiled-coil region spans residues 134–202 (ENEINLNKNK…HFIQNNQESF (69 aa)). Residues 211–231 (VKIGSAFIIYIFYNVLFFIIV) traverse the membrane as a helical segment.

It is found in the membrane. This is an uncharacterized protein from Dictyostelium discoideum (Social amoeba).